Here is a 118-residue protein sequence, read N- to C-terminus: Vitelline membrane protein Vm32E (118 aa).

Positions 1–17 are cleaved as a signal peptide; that stretch reads MKIVALTLVAFVALAGA. Positions 36 to 75 constitute a VM domain; that stretch reads GYPAPPCPTNYLFSCQPNLAPAPCAQEAQAPAYGSAGAYT.

The protein belongs to the vitelline membrane family.

It localises to the secreted. Major early eggshell protein. The protein is Vitelline membrane protein Vm32E of Drosophila simulans (Fruit fly).